Here is a 282-residue protein sequence, read N- to C-terminus: Energy-coupling factor transporter ATP-binding protein EcfA1 (282 aa).

An ABC transporter domain is found at 6–243 (VTVKHLSFTY…EVLIKSAGLE (238 aa)). 40–47 (GHNGSGKS) lines the ATP pocket.

The protein belongs to the ABC transporter superfamily. Energy-coupling factor EcfA family. In terms of assembly, forms a stable energy-coupling factor (ECF) transporter complex composed of 2 membrane-embedded substrate-binding proteins (S component), 2 ATP-binding proteins (A component) and 2 transmembrane proteins (T component).

The protein resides in the cell membrane. Functionally, ATP-binding (A) component of a common energy-coupling factor (ECF) ABC-transporter complex. Unlike classic ABC transporters this ECF transporter provides the energy necessary to transport a number of different substrates. This is Energy-coupling factor transporter ATP-binding protein EcfA1 from Lactobacillus johnsonii (strain CNCM I-12250 / La1 / NCC 533).